Reading from the N-terminus, the 222-residue chain is Octanoyltransferase (222 aa).

A BPL/LPL catalytic domain is found at 35 to 210 (ETTPDELWLV…EFVHLLGYPK (176 aa)). Residues 74 to 81 (RGGQVTYH), 141 to 143 (SLG), and 154 to 156 (GLA) each bind substrate. Residue Cys-172 is the Acyl-thioester intermediate of the active site.

The protein belongs to the LipB family.

It localises to the cytoplasm. It catalyses the reaction octanoyl-[ACP] + L-lysyl-[protein] = N(6)-octanoyl-L-lysyl-[protein] + holo-[ACP] + H(+). It participates in protein modification; protein lipoylation via endogenous pathway; protein N(6)-(lipoyl)lysine from octanoyl-[acyl-carrier-protein]: step 1/2. In terms of biological role, catalyzes the transfer of endogenously produced octanoic acid from octanoyl-acyl-carrier-protein onto the lipoyl domains of lipoate-dependent enzymes. Lipoyl-ACP can also act as a substrate although octanoyl-ACP is likely to be the physiological substrate. In Serratia proteamaculans (strain 568), this protein is Octanoyltransferase.